The sequence spans 1252 residues: Protein ITPRID2 (1252 aa).

Residues 28–70 are disordered; the sequence is CRSSWQASETEDLSTETTTQDEDEDDEEDLPGTKLPAPAGRGN. Positions 36–57 are enriched in acidic residues; sequence ETEDLSTETTTQDEDEDDEEDL. Residue threonine 85 is modified to Phosphothreonine. 5 positions are modified to phosphoserine: serine 90, serine 109, serine 207, serine 268, and serine 328. 3 disordered regions span residues 306-483, 552-575, and 595-636; these read DKTE…HVPA, HVTP…APLQ, and FPQC…GELP. Residues 357-372 show a composition bias toward low complexity; sequence TVTEEVSGSSSTVTDS. 2 stretches are compositionally biased toward basic and acidic residues: residues 395–407 and 415–428; these read SREA…DPLR and DLGH…HCEL. Over residues 429–441 the composition is skewed to low complexity; the sequence is ESSSELKSAQASS. Serine 465 is subject to Phosphoserine. A phosphoserine mark is found at serine 643, serine 667, serine 736, serine 738, serine 745, serine 758, and serine 766. Lysine 807 participates in a covalent cross-link: Glycyl lysine isopeptide (Lys-Gly) (interchain with G-Cter in SUMO2). Residues serine 866 and serine 898 each carry the phosphoserine modification. Residues 955–1031 adopt a coiled-coil conformation; that stretch reads QELQVVRRSL…LLGLDEQLRA (77 aa). 5 positions are modified to phosphoserine: serine 1036, serine 1051, serine 1056, serine 1059, and serine 1114. Disordered stretches follow at residues 1095–1131 and 1147–1180; these read GESS…GSKP and ALTP…ASPV. Low complexity predominate over residues 1103 to 1117; the sequence is SQATSESSSVCSSPS. Phosphothreonine is present on threonine 1149. Over residues 1151–1161 the composition is skewed to polar residues; the sequence is TAPSRTGSVQT. Serine 1154 is subject to Phosphoserine. Phosphothreonine is present on threonine 1161.

The protein resides in the cytoplasm. The chain is Protein ITPRID2 (Itprid2) from Mus musculus (Mouse).